A 488-amino-acid chain; its full sequence is Katanin p60 ATPase-containing subunit A-like 1 (488 aa).

An N-acetylmethionine modification is found at M1. The tract at residues 128–179 (GAGARGLVGRAHQISKSDKAASRDKDYRARGRDDKARKNMQDGASDGEIPKF) is disordered. Residues 142 to 167 (SKSDKAASRDKDYRARGRDDKARKNM) are compositionally biased toward basic and acidic residues. S172 bears the Phosphoserine mark. 246 to 253 (GPPGTGKT) is an ATP binding site.

The protein belongs to the AAA ATPase family. Katanin p60 subunit A1 subfamily. A-like 1 sub-subfamily. As to quaternary structure, interacts with KATNB1 and KATNBL1.

It is found in the cytoplasm. It localises to the cytoskeleton. The protein localises to the spindle pole. Its subcellular location is the spindle. It catalyses the reaction n ATP + n H2O + a microtubule = n ADP + n phosphate + (n+1) alpha/beta tubulin heterodimers.. Regulates microtubule dynamics in Sertoli cells, a process that is essential for spermiogenesis and male fertility. Severs microtubules in an ATP-dependent manner, promoting rapid reorganization of cellular microtubule arrays. Has microtubule-severing activity in vitro. This Rattus norvegicus (Rat) protein is Katanin p60 ATPase-containing subunit A-like 1 (Katnal1).